The chain runs to 251 residues: Ubiquinone/menaquinone biosynthesis C-methyltransferase UbiE (251 aa).

S-adenosyl-L-methionine contacts are provided by residues Thr74, Asp95, 123 to 124 (NA), and Ser140.

This sequence belongs to the class I-like SAM-binding methyltransferase superfamily. MenG/UbiE family.

It carries out the reaction a 2-demethylmenaquinol + S-adenosyl-L-methionine = a menaquinol + S-adenosyl-L-homocysteine + H(+). It catalyses the reaction a 2-methoxy-6-(all-trans-polyprenyl)benzene-1,4-diol + S-adenosyl-L-methionine = a 5-methoxy-2-methyl-3-(all-trans-polyprenyl)benzene-1,4-diol + S-adenosyl-L-homocysteine + H(+). It functions in the pathway quinol/quinone metabolism; menaquinone biosynthesis; menaquinol from 1,4-dihydroxy-2-naphthoate: step 2/2. Its pathway is cofactor biosynthesis; ubiquinone biosynthesis. Functionally, methyltransferase required for the conversion of demethylmenaquinol (DMKH2) to menaquinol (MKH2) and the conversion of 2-polyprenyl-6-methoxy-1,4-benzoquinol (DDMQH2) to 2-polyprenyl-3-methyl-6-methoxy-1,4-benzoquinol (DMQH2). This chain is Ubiquinone/menaquinone biosynthesis C-methyltransferase UbiE, found in Escherichia coli O1:K1 / APEC.